Here is a 356-residue protein sequence, read N- to C-terminus: RuBisCO accumulation factor 1 (356 aa).

Residues 7-185 are N-terminal alpha-helix; it reads ALTTEVLQRL…RQALEKLLTD (179 aa). The segment at 209–342 is C-terminal beta-sheet; sequence PYLVPVAGTA…LLLVLRPPQV (134 aa).

It belongs to the RAF family. As to quaternary structure, homodimer. Forms an RbcL(8)-Raf1(8) complex. Forms complexes of many stoichiometries with RbcL with and without RbcS. RbcX and Raf1 can bind simultaneously to RbcL.

It is found in the cytoplasm. Its function is as follows. A major RuBisCO chaperone. Acts after GroEL-GroES chaperonin to fold and/or assemble the large subunit of RuBisCO (ccbL, rbcL). Cooperates with RbcX in RbcL folding, plays the major role in assembly of dimers into RbcL(8)-Raf1(8) intermediate complexes. RbcS replaces Raf1, leading to holoenzyme formation. In terms of biological role, required for optimal reconstitution of RuBisCO upon expression of rbcL-rbcS subunits in E.coli. Only interacts with the large subunit (cbbL, rbcL). Probably acts in the final stages of RuBisCO assembly, possibly participating in the addition of the small subunit (ccbS, rbcS). In Thermosynechococcus vestitus (strain NIES-2133 / IAM M-273 / BP-1), this protein is RuBisCO accumulation factor 1.